The following is a 375-amino-acid chain: Carbamoyl phosphate synthase small chain (375 aa).

Residues 1–185 form a CPSase region; it reads MTQPAILVLE…LNANAFVQAE (185 aa). 3 residues coordinate L-glutamine: serine 47, glycine 237, and glycine 239. The Glutamine amidotransferase type-1 domain occupies 189-375; it reads KVVAYDYGVK…FVASMAEAKS (187 aa). Residue cysteine 265 is the Nucleophile of the active site. L-glutamine-binding residues include leucine 266, glutamine 269, asparagine 307, glycine 309, and phenylalanine 310. Residues histidine 349 and glutamate 351 contribute to the active site.

Belongs to the CarA family. In terms of assembly, composed of two chains; the small (or glutamine) chain promotes the hydrolysis of glutamine to ammonia, which is used by the large (or ammonia) chain to synthesize carbamoyl phosphate. Tetramer of heterodimers (alpha,beta)4.

It catalyses the reaction hydrogencarbonate + L-glutamine + 2 ATP + H2O = carbamoyl phosphate + L-glutamate + 2 ADP + phosphate + 2 H(+). The enzyme catalyses L-glutamine + H2O = L-glutamate + NH4(+). It participates in amino-acid biosynthesis; L-arginine biosynthesis; carbamoyl phosphate from bicarbonate: step 1/1. It functions in the pathway pyrimidine metabolism; UMP biosynthesis via de novo pathway; (S)-dihydroorotate from bicarbonate: step 1/3. Its function is as follows. Small subunit of the glutamine-dependent carbamoyl phosphate synthetase (CPSase). CPSase catalyzes the formation of carbamoyl phosphate from the ammonia moiety of glutamine, carbonate, and phosphate donated by ATP, constituting the first step of 2 biosynthetic pathways, one leading to arginine and/or urea and the other to pyrimidine nucleotides. The small subunit (glutamine amidotransferase) binds and cleaves glutamine to supply the large subunit with the substrate ammonia. In Xanthomonas campestris pv. campestris (strain ATCC 33913 / DSM 3586 / NCPPB 528 / LMG 568 / P 25), this protein is Carbamoyl phosphate synthase small chain.